The sequence spans 47 residues: Lysis protein for colicins E2 and E3 (47 aa).

The N-terminal stretch at 1-19 (MKKITGIILLLLAVIILSA) is a signal peptide. Residue cysteine 20 is the site of N-palmitoyl cysteine attachment. The S-diacylglycerol cysteine moiety is linked to residue cysteine 20.

It localises to the cell outer membrane. In terms of biological role, lysis proteins are required for both colicin release and partial cell lysis. This is Lysis protein for colicins E2 and E3 (hic) from Escherichia coli.